Reading from the N-terminus, the 205-residue chain is Anaerobic dimethyl sulfoxide reductase chain B (205 aa).

4Fe-4S ferredoxin-type domains are found at residues 5–33, 59–89, and 90–119; these read YGFF…LTPE, FAYY…KRED, and GFVV…YNET. [4Fe-4S] cluster-binding residues include cysteine 14, cysteine 17, cysteine 20, cysteine 24, cysteine 67, cysteine 70, cysteine 75, cysteine 79, cysteine 99, cysteine 102, cysteine 105, cysteine 109, cysteine 126, cysteine 129, cysteine 141, and cysteine 145. A disordered region spans residues 184-205; the sequence is KPNANSRPTGDTTGYLANPKEV. Over residues 186–195 the composition is skewed to polar residues; it reads NANSRPTGDT.

In terms of assembly, heterotrimeric enzyme composed of a catalytic heterodimer (DmsAB) and a membrane anchor protein (DmsC). [4Fe-4S] cluster is required as a cofactor.

Electron transfer subunit of the terminal reductase during anaerobic growth on various sulfoxide and N-oxide compounds. This Escherichia coli (strain K12) protein is Anaerobic dimethyl sulfoxide reductase chain B (dmsB).